A 1015-amino-acid polypeptide reads, in one-letter code: Condensin complex subunit 3 (1015 aa).

HEAT repeat units follow at residues 94–131, 138–173, 174–212, 238–275, and 276–313; these read GLLNYLFTFLLKSHEANSNAVRFRVCLLINKLLGSMPE, DVFDKINKAMLIRLKDKIPNVRIQAVLALSRLQDPK, DDECPVVNAYATLIENDSNPEVRRAVLSCIAPSAKTLPK, MRAMSIAQRVMLLQQGLNDRSDAVKQAMQKHLLQGWLR, and FSEGNILELLHRLDVENSSEVAVSVLNALFSITPLSEL. Ser390 is subject to Phosphoserine. HEAT repeat units lie at residues 399 to 436, 439 to 478, and 617 to 654; these read EFIGQQLILIIKSLDTSEEGGRKKLLAVLQEILILPTI, SLVSFLVERLLHIIIDDNKRTQIVTEIISEIRAPIVTVGV, and DFARKHFVLLLQVLQIDDVTIKISALKAIFDQLMTFGI. The residue at position 674 (Ser674) is a Phosphoserine. HEAT repeat units follow at residues 687-724 and 865-907; these read ATAKNVLKLLSDFLDSEVSELRTGAAEGLAKLMFSGLL and KDLL…QAEA. At Thr931 the chain carries Phosphothreonine. Over residues 941–950 the composition is skewed to polar residues; sequence ASKSTQLKTN. The segment at 941–994 is disordered; it reads ASKSTQLKTNRGQRKVTVSARTNRRCQTAEADSESDHEVPEPESEMKMRLPRRA. Ser973, Ser975, Ser1002, and Ser1015 each carry phosphoserine. Residues 974 to 988 show a composition bias toward basic and acidic residues; sequence ESDHEVPEPESEMKM.

The protein belongs to the CND3 (condensin subunit 3) family. Component of the condensin complex, which contains the SMC2 and SMC4 heterodimer, and three non SMC subunits that probably regulate the complex: NCAPH/BRRN1, NCAPD2/CAPD2 and NCAPG. In terms of processing, phosphorylated by CDK1. Its phosphorylation, as well as that of NCAPD2 and NCAPH subunits, activates the condensin complex and is required for chromosome condensation. In terms of tissue distribution, highly expressed in testis.

The protein resides in the nucleus. The protein localises to the cytoplasm. It localises to the chromosome. In terms of biological role, regulatory subunit of the condensin complex, a complex required for conversion of interphase chromatin into mitotic-like condense chromosomes. The condensin complex probably introduces positive supercoils into relaxed DNA in the presence of type I topoisomerases and converts nicked DNA into positive knotted forms in the presence of type II topoisomerases. In Homo sapiens (Human), this protein is Condensin complex subunit 3 (NCAPG).